Reading from the N-terminus, the 267-residue chain is Sorbitol-6-phosphate 2-dehydrogenase (267 aa).

9 to 38 is a binding site for NAD(+); it reads DNVIIVTGGASGIGLAIVDELLSQGAHVQM. Position 147 (serine 147) interacts with substrate. Tyrosine 160 (proton acceptor) is an active-site residue.

This sequence belongs to the short-chain dehydrogenases/reductases (SDR) family. In terms of assembly, homotetramer.

The enzyme catalyses D-sorbitol 6-phosphate + NAD(+) = beta-D-fructose 6-phosphate + NADH + H(+). Its pathway is carbohydrate metabolism; D-sorbitol degradation; D-fructose 6-phosphate from D-sorbitol 6-phosphate: step 1/1. This chain is Sorbitol-6-phosphate 2-dehydrogenase (sorD), found in Klebsiella pneumoniae.